The chain runs to 374 residues: UPF0754 membrane protein SAB1779c (374 aa).

2 consecutive transmembrane segments (helical) span residues 4–24 (LFIIIFMIVVGAIIGGITNVI) and 354–374 (SLGFILGGIIGFFQGLVAIFV).

It belongs to the UPF0754 family.

It is found in the cell membrane. The chain is UPF0754 membrane protein SAB1779c from Staphylococcus aureus (strain bovine RF122 / ET3-1).